We begin with the raw amino-acid sequence, 167 residues long: SsrA-binding protein (167 aa).

The disordered stretch occupies residues 144–167; that stretch reads HDKRAADKEKQSKKEVRSAMAKYQ. Positions 146–160 are enriched in basic and acidic residues; the sequence is KRAADKEKQSKKEVR.

It belongs to the SmpB family.

The protein localises to the cytoplasm. Functionally, required for rescue of stalled ribosomes mediated by trans-translation. Binds to transfer-messenger RNA (tmRNA), required for stable association of tmRNA with ribosomes. tmRNA and SmpB together mimic tRNA shape, replacing the anticodon stem-loop with SmpB. tmRNA is encoded by the ssrA gene; the 2 termini fold to resemble tRNA(Ala) and it encodes a 'tag peptide', a short internal open reading frame. During trans-translation Ala-aminoacylated tmRNA acts like a tRNA, entering the A-site of stalled ribosomes, displacing the stalled mRNA. The ribosome then switches to translate the ORF on the tmRNA; the nascent peptide is terminated with the 'tag peptide' encoded by the tmRNA and targeted for degradation. The ribosome is freed to recommence translation, which seems to be the essential function of trans-translation. This Synechococcus sp. (strain CC9902) protein is SsrA-binding protein.